Here is a 347-residue protein sequence, read N- to C-terminus: Probable E3 ubiquitin-protein ligase DTX3 (347 aa).

The tract at residues 111–157 is disordered; that stretch reads GGEHPELHRPGPPPLRAAPLLPPGARGLPPPPPPLPPPLPPRLREDA. Pro residues predominate over residues 120 to 151; that stretch reads PGPPPLRAAPLLPPGARGLPPPPPPLPPPLPP. Residues 164 to 205 form an RING-type zinc finger; that stretch reads CPICLGEIQNAKTLEKCRHSFCEGCITRALQVKKACPMCGRF.

The protein belongs to the Deltex family. In terms of assembly, homodimer. May form a heterodimer with other members of the Deltex family. Interacts with NOTCH1. Strongly expressed in testis and brain. Weakly expressed in kidney.

It is found in the cytoplasm. The enzyme catalyses S-ubiquitinyl-[E2 ubiquitin-conjugating enzyme]-L-cysteine + [acceptor protein]-L-lysine = [E2 ubiquitin-conjugating enzyme]-L-cysteine + N(6)-ubiquitinyl-[acceptor protein]-L-lysine.. The protein operates within protein modification; protein ubiquitination. Functionally, regulator of Notch signaling, a signaling pathway involved in cell-cell communications that regulates a broad spectrum of cell-fate determinations. Probably acts both as a positive and negative regulator of Notch, depending on the developmental and cell context. Functions as a ubiquitin ligase protein in vitro, suggesting that it may regulate the Notch pathway via some ubiquitin ligase activity. The polypeptide is Probable E3 ubiquitin-protein ligase DTX3 (Dtx3) (Mus musculus (Mouse)).